Here is a 305-residue protein sequence, read N- to C-terminus: Serine/threonine-protein phosphatase PP2A catalytic subunit (305 aa).

Residues D53, H55, D81, and N113 each contribute to the Mn(2+) site. Catalysis depends on H114, which acts as the Proton donor. Positions 163 and 237 each coordinate Mn(2+).

It belongs to the PPP phosphatase family. PP-2A subfamily. Requires Mn(2+) as cofactor.

It catalyses the reaction O-phospho-L-seryl-[protein] + H2O = L-seryl-[protein] + phosphate. The enzyme catalyses O-phospho-L-threonyl-[protein] + H2O = L-threonyl-[protein] + phosphate. The protein is Serine/threonine-protein phosphatase PP2A catalytic subunit of Helianthus annuus (Common sunflower).